A 56-amino-acid polypeptide reads, in one-letter code: Large ribosomal subunit protein bL32 (56 aa).

Residues 1–16 (MAVQKSKKSRAARGMR) are compositionally biased toward basic residues. Residues 1–22 (MAVQKSKKSRAARGMRRSHDAL) are disordered.

This sequence belongs to the bacterial ribosomal protein bL32 family.

This chain is Large ribosomal subunit protein bL32, found in Photobacterium profundum (strain SS9).